A 508-amino-acid chain; its full sequence is MADDPGSSFTTVWNAVVSELNGEPVADAEPNRTTLVTPLTPQQRAWLNLVRPLTIVEGFALLSVPSSFVQNEIERHLRAPITDALSRRLGQQIQLGVRIAPPPDDVEDALIPSAEPFPDTDADLSARRRTDSRASGERGAVTNTQPGWTNYFTERPHAIDPAVAAGTSLNRRYTFDTFVIGASNRFAHAAVLAIAEAPARAYNPLFIWGESGLGKTHLLHAAGNYAQRFFPGMRVKYVSTEEFTNDFINSLRDDRKVPFKRTIRDVDVLLVDDIQFIEGKEGIQEEFFHTFNTLHNANKQIVISSDRPPKQLATLEDRLRTRFEWGLITDVQPPELETRIAILRKKAQMERLAVPDDVLELIASSIERNIRELEGALIRVTAFASLNKTPIDKSLAEIVLRDLIADASTMQISAATIMAATAEYFDTTVVELRGPGKTRALAQSRQIAMYLCRELTDLSLPKIGQAFGRDHTTLMYGQRKILSEMAERRGGFDHVKELTTRIRQRSKR.

The segment at 1 to 91 (MADDPGSSFT…TDALSRRLGQ (91 aa)) is domain I, interacts with DnaA modulators. The tract at residues 91 to 167 (QQIQLGVRIA…AIDPAVAAGT (77 aa)) is domain II. Positions 104–152 (DDVEDALIPSAEPFPDTDADLSARRRTDSRASGERGAVTNTQPGWTNYF) are disordered. Basic and acidic residues predominate over residues 124-136 (LSARRRTDSRASG). A compositionally biased stretch (polar residues) spans 141-152 (VTNTQPGWTNYF). Residues 168-384 (SLNRRYTFDT…GALIRVTAFA (217 aa)) are domain III, AAA+ region. Positions 212, 214, 215, and 216 each coordinate ATP. Positions 385–508 (SLNKTPIDKS…TTRIRQRSKR (124 aa)) are domain IV, binds dsDNA.

The protein belongs to the DnaA family. In terms of assembly, oligomerizes as a right-handed, spiral filament on DNA at oriC.

The protein resides in the cytoplasm. Its function is as follows. Plays an essential role in the initiation and regulation of chromosomal replication. ATP-DnaA binds to the origin of replication (oriC) to initiate formation of the DNA replication initiation complex once per cell cycle. Binds the DnaA box (a 9 base pair repeat at the origin) and separates the double-stranded (ds)DNA. Forms a right-handed helical filament on oriC DNA; dsDNA binds to the exterior of the filament while single-stranded (ss)DNA is stabiized in the filament's interior. The ATP-DnaA-oriC complex binds and stabilizes one strand of the AT-rich DNA unwinding element (DUE), permitting loading of DNA polymerase. After initiation quickly degrades to an ADP-DnaA complex that is not apt for DNA replication. Binds acidic phospholipids. The chain is Chromosomal replication initiator protein DnaA from Mycobacterium avium.